We begin with the raw amino-acid sequence, 479 residues long: Leucine-rich repeat-containing protein 74A (479 aa).

Residues 1 to 10 (MDDDDIEPLE) are compositionally biased toward acidic residues. The disordered stretch occupies residues 1-29 (MDDDDIEPLEYETKDETEAALAPQSSEDT). LRR repeat units follow at residues 119–140 (TVLK…SLME), 147–167 (YLQE…RIIS), 176–197 (SLWK…LLCQ), 204–225 (RIRS…YLGQ), 232–253 (GLQS…ALCN), 260–281 (TLKK…ALGD), 288–309 (CLVY…RISK), and 316–336 (CLQV…YSLI).

This chain is Leucine-rich repeat-containing protein 74A, found in Rattus norvegicus (Rat).